The chain runs to 329 residues: Glucokinase (329 aa).

An ATP-binding site is contributed by 13–18; the sequence is GDIGGT.

This sequence belongs to the bacterial glucokinase family.

It is found in the cytoplasm. The catalysed reaction is D-glucose + ATP = D-glucose 6-phosphate + ADP + H(+). The polypeptide is Glucokinase (Caulobacter sp. (strain K31)).